The sequence spans 149 residues: Calmodulin-1 (149 aa).

Alanine 2 carries the N-acetylalanine modification. EF-hand domains are found at residues 8-43 (EQIA…LGQN), 44-79 (PTEA…KMKD), 81-116 (DSEE…LGEK), and 117-149 (LTDE…MLAK). Residues aspartate 21, aspartate 23, aspartate 25, cysteine 27, glutamate 32, aspartate 57, aspartate 59, asparagine 61, threonine 63, glutamate 68, aspartate 94, aspartate 96, asparagine 98, and glutamate 105 each contribute to the Ca(2+) site. Residue lysine 116 is modified to N6,N6,N6-trimethyllysine. Residues aspartate 130, aspartate 132, aspartate 134, glutamine 136, and glutamate 141 each contribute to the Ca(2+) site.

It belongs to the calmodulin family. As to expression, high expression in stolon tips and stems, moderate in roots, and very low in leaves. Localized in the meristematic regions of the shoot and root tips, the tip of the developing tuber and the vascular zones of petiole and tuber. Not detected in mesophyll cells.

Calmodulin mediates the control of a large number of enzymes, ion channels and other proteins by Ca(2+). Among the enzymes to be stimulated by the calmodulin-Ca(2+) complex are a number of protein kinases and phosphatases. The chain is Calmodulin-1 (PCM1) from Solanum tuberosum (Potato).